We begin with the raw amino-acid sequence, 308 residues long: Leucine-rich repeat-containing protein 59 (308 aa).

Over Met1 to Lys248 the chain is Cytoplasmic. 5 LRR repeats span residues Asn10–Pro31, Lys40–Leu61, Tyr63–Leu84, Asn86–Leu107, and Ser109–Ala128. Positions Asp154–Glu223 form a coiled coil. Composition is skewed to basic and acidic residues over residues Lys170–Leu187, Gln194–Tyr203, and Lys218–Lys237. The tract at residues Lys170 to Ala240 is disordered. The helical transmembrane segment at Ile249–Phe269 threads the bilayer. Over Thr270 to Gln308 the chain is Lumenal.

In terms of assembly, interacts with SGO1.

It is found in the microsome membrane. The protein localises to the endoplasmic reticulum membrane. Its subcellular location is the nucleus envelope. In terms of biological role, required for nuclear import of FGF1. In Xenopus tropicalis (Western clawed frog), this protein is Leucine-rich repeat-containing protein 59 (lrrc59).